The chain runs to 872 residues: Metabotropic glutamate receptor 2 (872 aa).

The N-terminal stretch at 1–18 (MGSLLALLALLLLWGAVA) is a signal peptide. Topologically, residues 19–567 (EGPAKKVLTL…QEYIRWGDAW (549 aa)) are extracellular. Cysteine 50 and cysteine 92 form a disulfide bridge. Arginine 57, arginine 61, serine 145, alanine 166, and threonine 168 together coordinate L-glutamate. Asparagine 203 and asparagine 286 each carry an N-linked (GlcNAc...) asparagine glycan. Cystine bridges form between cysteine 234–cysteine 518, cysteine 355–cysteine 362, cysteine 400–cysteine 407, cysteine 500–cysteine 519, cysteine 504–cysteine 522, cysteine 525–cysteine 537, and cysteine 540–cysteine 553. Aspartate 295 contributes to the L-glutamate binding site. Residue asparagine 338 is glycosylated (N-linked (GlcNAc...) asparagine). Lysine 377 is an L-glutamate binding site. A glycan (N-linked (GlcNAc...) asparagine) is linked at asparagine 402. A glycan (N-linked (GlcNAc...) asparagine) is linked at asparagine 547. Residues 568 to 590 (AVGPVTIACLGALATLFVLGVFV) form a helical membrane-spanning segment. Over 591–604 (RHNATPVVKASGRE) the chain is Cytoplasmic. The helical transmembrane segment at 605–625 (LCYILLGGVFLCYCMTFIFIA) threads the bilayer. The Extracellular segment spans residues 626 to 636 (KPSTAVCTLRR). A disulfide bond links cysteine 632 and cysteine 721. The helical transmembrane segment at 637-655 (LGLGTAFSVCYSALLTKTN) threads the bilayer. At 656 to 679 (RIARIFGGAREGAQRPRFISPASQ) the chain is on the cytoplasmic side. Residues 677–685 (ASQVAICLA) form an important for interaction with HTR2A region. Residues 680–700 (VAICLALISGQLLIVVAWLVV) traverse the membrane as a helical segment. The Extracellular portion of the chain corresponds to 701–725 (EAPGTGKETAPERREVVTLRCNHRD). A helical membrane pass occupies residues 726–747 (ASMLGSLAYNVLLIALCTLYAF). Residues 748–760 (KTRKCPENFNEAK) are Cytoplasmic-facing. A helical membrane pass occupies residues 761 to 783 (FIGFTMYTTCIIWLAFLPIFYVT). Residues 784–793 (SSDYRVQTTT) lie on the Extracellular side of the membrane. The helical transmembrane segment at 794–819 (MCVSVSLSGSVVLGCLFAPKLHIILF) threads the bilayer. Residues 820 to 872 (QPQKNVVSHRAPTSRFGSAAARASSSLGQGSGSQFVPTVCNGREVVDSTTSSL) lie on the Cytoplasmic side of the membrane.

The protein belongs to the G-protein coupled receptor 3 family. Forms heterodimers with GRM3 or GRM4. Interacts with TAMALIN. Interacts with HTR2A. As to quaternary structure, (Microbial infection) Interacts with H5N6 virus protein HA. In terms of assembly, (Microbial infection) Interacts with rabies virus protein G. (Microbial infection) Interacts with SARS-CoV-2 virus spike protein S. As to expression, detected in brain cortex (at protein level). Widely expressed in different regions of the adult brain as well as in fetal brain.

It is found in the cell membrane. Its subcellular location is the synapse. It localises to the cell projection. The protein resides in the dendrite. Functionally, dimeric G protein-coupled receptor which is activated by the excitatory neurotransmitter L-glutamate. Plays critical roles in modulating synaptic transmission and neuronal excitability. Upon activation by glutamate, inhibits presynaptic calcium channels, reducing further glutamate release and dampening excitatory signaling. Mechanistically, ligand binding causes a conformation change that triggers signaling via guanine nucleotide-binding proteins (G proteins) and modulates the activity of down-stream effectors, such as adenylate cyclase. May mediate suppression of neurotransmission or may be involved in synaptogenesis or synaptic stabilization. Its function is as follows. (Microbial infection) Plays an important role in influenza virus internalization. (Microbial infection) Acts as a host entry factor for rabies virus that hijacks the endocytosis of GRM2 to enter cells. In terms of biological role, (Microbial infection) Acts as a host entry factor for SARS-CoV-2 that hijacks the endocytosis of GRM2 to enter cells. This is Metabotropic glutamate receptor 2 from Homo sapiens (Human).